The primary structure comprises 591 residues: L-fucose isomerase (591 aa).

Residues Glu-338 and Asp-362 each act as proton acceptor in the active site. Residues Glu-338, Asp-362, and His-529 each contribute to the Mn(2+) site.

It belongs to the L-fucose isomerase family. Mn(2+) serves as cofactor.

It localises to the cytoplasm. It carries out the reaction L-fucose = L-fuculose. Its pathway is carbohydrate degradation; L-fucose degradation; L-lactaldehyde and glycerone phosphate from L-fucose: step 1/3. Its function is as follows. Converts the aldose L-fucose into the corresponding ketose L-fuculose. This chain is L-fucose isomerase, found in Phocaeicola vulgatus (strain ATCC 8482 / DSM 1447 / JCM 5826 / CCUG 4940 / NBRC 14291 / NCTC 11154) (Bacteroides vulgatus).